The following is a 599-amino-acid chain: Estrogen receptor (599 aa).

The modulating (transactivation AF-1); mediates interaction with MACROD1 stretch occupies residues 1–188 (MTMTLHTKAS…IMESAKETRY (188 aa)). A glycan (O-linked (GlcNAc) serine) is linked at Ser-10. The tract at residues 35 to 47 (MERALGEVYVDNS) is required for interaction with NCOA1. Residues 35–178 (MERALGEVYV…LSSSNEKGNM (144 aa)) are interaction with DDX5; self-association. The O-linked (GlcNAc) threonine glycan is linked to Thr-50. 2 positions are modified to phosphoserine; by CDK2: Ser-108 and Ser-110. Position 122 is a phosphoserine (Ser-122). A disordered region spans residues 147 to 175 (DTGPPAFYRSNSDNRRQNGRERLSSSNEK). The span at 158 to 169 (SDNRRQNGRERL) shows a compositional bias: basic and acidic residues. Ser-171 carries the phosphoserine; by CK2 modification. 2 NR C4-type zinc fingers span residues 189–209 (CAVC…CEGC) and 225–249 (CPAT…LRKC). The nuclear receptor DNA-binding region spans 189-254 (CAVCNDYASG…RLRKCYEVGM (66 aa)). Positions 189 to 314 (CAVCNDYASG…TKKNSPALSL (126 aa)) are mediates interaction with DNTTIP2. The interval 255-314 (MKGGIRKDRRGGRMLKHKRQRDDLEGRNEMGASGDMRAANLWPSPLVIKHTKKNSPALSL) is hinge. Asymmetric dimethylarginine; by PRMT1 is present on Arg-264. An interaction with AKAP13 region spans residues 266–599 (GRMLKHKRQR…PEAEGFPNTI (334 aa)). Residues 268 to 599 (MLKHKRQRDD…PEAEGFPNTI (332 aa)) form a self-association region. The region spanning 315–551 (TADQMVSALL…DLLLEMLDAH (237 aa)) is the NR LBD domain. Residues 315–599 (TADQMVSALL…PEAEGFPNTI (285 aa)) form a transactivation AF-2 region. Residues Glu-357 and Arg-398 each contribute to the 17beta-estradiol site. Cys-451 carries S-palmitoyl cysteine lipidation. Residue His-528 coordinates 17beta-estradiol. The residue at position 541 (Tyr-541) is a Phosphotyrosine; by Tyr-kinases. Positions 557–581 (ASRMGVPPEEPSQTQLATTSSTSAH) are disordered. Positions 568–581 (SQTQLATTSSTSAH) are enriched in low complexity. O-linked (GlcNAc) threonine glycosylation occurs at Thr-575.

This sequence belongs to the nuclear hormone receptor family. NR3 subfamily. As to quaternary structure, interacts with BCAS3. Binds DNA as a homodimer. Can form a heterodimer with ESR2. Interacts with coactivator NCOA5. Interacts with PELP1, the interaction is enhanced by 17-beta-estradiol; the interaction increases ESR1 transcriptional activity. Interacts with NCOA7; the interaction is ligand-inducible. Interacts with AKAP13, CUEDC2, HEXIM1, KDM5A, MAP1S, SMARD1, and UBE1C. Interacts with MUC1; the interaction is stimulated by 7 beta-estradiol (E2) and enhances ESR1-mediated transcription. Interacts with DNTTIP2, and UIMC1. Interacts with KMT2D/MLL2. Interacts with ATAD2; the interaction is enhanced by estradiol. Interacts with KIF18A and LDB1. Interacts with RLIM (via its C-terminus). Interacts with MACROD1. Interacts with SH2D4A and PLCG. Interacts with SH2D4A; the interaction blocks binding to PLCG and inhibits estrogen-induced cell proliferation. Interacts with DYNLL1. Interacts with CCDC62; the interaction requires estradiol and appears to enhance the transcription of target genes. Interacts with NR2C1; the interaction prevents homodimerization of ESR1 and suppresses its transcriptional activity and cell growth. Interacts with DNAAF4. Interacts with PRMT2. Interacts with RBFOX2. Interacts with EP300; the interaction is estrogen-dependent and enhanced by CITED1. Interacts with CITED1; the interaction is estrogen-dependent. Interacts with FAM120B, FOXL2, PHB2 and SLC30A9. Interacts with coactivators NCOA3 and NCOA6. Interacts with STK3/MST2 only in the presence of SAV1 and vice-versa. Binds to CSNK1D. Interacts with NCOA2; NCOA2 can interact with ESR1 AF-1 and AF-2 domains simultaneously and mediate their transcriptional synergy. Interacts with DDX5. Interacts with NCOA1; the interaction seems to require a self-association of N-terminal and C-terminal regions. Interacts with ZNF366, DDX17, NFKB1, RELA, SP1 and SP3. Interacts with NRIP1. Interacts with GPER1; the interaction occurs in an estrogen-dependent manner. Interacts with CLOCK and the interaction is stimulated by estrogen. Interacts with BCAS3. Interacts with TRIP4 (ufmylated); estrogen dependent. Interacts with LMTK3; the interaction phosphorylates ESR1 (in vitro) and protects it against proteasomal degradation. Interacts with CCAR2 (via N-terminus) in a ligand-independent manner. Interacts with ZFHX3. Interacts with SFR1 in a ligand-dependent and -independent manner. Interacts with DCAF13, LATS1 and DCAF1; regulates ESR1 ubiquitination and ubiquitin-mediated proteasomal degradation. Interacts (via DNA-binding domain) with POU4F2 isoform 2 (C-terminus); this interaction increases the estrogen receptor ESR1 transcriptional activity in a DNA- and ligand 17-beta-estradiol-independent manner. Interacts with ESRRB isoform 1. Interacts with UBE3A and WBP2. Interacts with GTF2B. Interacts with RBM39. In the absence of hormonal ligand, interacts with TACC1. Interacts with PI3KR1 or PI3KR2 and PTK2/FAK1. Interacts with SRC. Interacts with BAG1; the interaction is promoted in the absence of estradiol (17-beta-estradiol/E2). Interacts with and ubiquitinated by STUB1; the interaction is promoted in the absence of estradiol (17-beta-estradiol/E2). Interacts with NEDD8. Post-translationally, phosphorylated by cyclin A/CDK2 and CK1. Phosphorylation probably enhances transcriptional activity. Dephosphorylation at Ser-122 by PPP5C inhibits its transactivation activity. Phosphorylated by LMTK3 (in vitro). In terms of processing, ubiquitinated. Deubiquitinated by OTUB1. Palmitoylated at Cys-451 by ZDHHC7 and ZDHHC21. This modification is required for plasma membrane targeting and for rapid intracellular signaling via ERK and AKT kinases and cAMP generation, but not for signaling mediated by the nuclear hormone receptor. Post-translationally, ubiquitinated; regulated by LATS1 via DCAF1 it leads to ESR1 proteasomal degradation. Deubiquitinated by OTUB1. Ubiquitinated by STUB1/CHIP; in the CA1 hippocampal region following loss of endogenous circulating estradiol (17-beta-estradiol/E2). Ubiquitinated by UBR5, leading to its degradation: UBR5 specifically recognizes and binds ligand-bound ESR1 when it is not associated with coactivators (NCOAs). In presence of NCOAs, the UBR5-degron is not accessible, preventing its ubiquitination and degradation. In terms of processing, dimethylated by PRMT1 at Arg-264. The methylation may favor cytoplasmic localization. Demethylated by JMJD6 at Arg-264.

The protein resides in the nucleus. It is found in the cytoplasm. Its subcellular location is the golgi apparatus. The protein localises to the cell membrane. Nuclear hormone receptor. The steroid hormones and their receptors are involved in the regulation of eukaryotic gene expression and affect cellular proliferation and differentiation in target tissues. Ligand-dependent nuclear transactivation involves either direct homodimer binding to a palindromic estrogen response element (ERE) sequence or association with other DNA-binding transcription factors, such as AP-1/c-Jun, c-Fos, ATF-2, Sp1 and Sp3, to mediate ERE-independent signaling. Ligand binding induces a conformational change allowing subsequent or combinatorial association with multiprotein coactivator complexes through LXXLL motifs of their respective components. Mutual transrepression occurs between the estrogen receptor (ER) and NF-kappa-B in a cell-type specific manner. Decreases NF-kappa-B DNA-binding activity and inhibits NF-kappa-B-mediated transcription from the IL6 promoter and displace RELA/p65 and associated coregulators from the promoter. Recruited to the NF-kappa-B response element of the CCL2 and IL8 promoters and can displace CREBBP. Present with NF-kappa-B components RELA/p65 and NFKB1/p50 on ERE sequences. Can also act synergistically with NF-kappa-B to activate transcription involving respective recruitment adjacent response elements; the function involves CREBBP. Can activate the transcriptional activity of TFF1. Also mediates membrane-initiated estrogen signaling involving various kinase cascades. Essential for MTA1-mediated transcriptional regulation of BRCA1 and BCAS3. Maintains neuronal survival in response to ischemic reperfusion injury when in the presence of circulating estradiol (17-beta-estradiol/E2). This Mus musculus (Mouse) protein is Estrogen receptor (Esr1).